Reading from the N-terminus, the 269-residue chain is Ubiquinone/menaquinone biosynthesis C-methyltransferase UbiE (269 aa).

Residues Thr-92, Asp-113, and Asn-141–Ala-142 contribute to the S-adenosyl-L-methionine site.

The protein belongs to the class I-like SAM-binding methyltransferase superfamily. MenG/UbiE family.

It carries out the reaction a 2-demethylmenaquinol + S-adenosyl-L-methionine = a menaquinol + S-adenosyl-L-homocysteine + H(+). It catalyses the reaction a 2-methoxy-6-(all-trans-polyprenyl)benzene-1,4-diol + S-adenosyl-L-methionine = a 5-methoxy-2-methyl-3-(all-trans-polyprenyl)benzene-1,4-diol + S-adenosyl-L-homocysteine + H(+). Its pathway is quinol/quinone metabolism; menaquinone biosynthesis; menaquinol from 1,4-dihydroxy-2-naphthoate: step 2/2. The protein operates within cofactor biosynthesis; ubiquinone biosynthesis. Functionally, methyltransferase required for the conversion of demethylmenaquinol (DMKH2) to menaquinol (MKH2) and the conversion of 2-polyprenyl-6-methoxy-1,4-benzoquinol (DDMQH2) to 2-polyprenyl-3-methyl-6-methoxy-1,4-benzoquinol (DMQH2). The chain is Ubiquinone/menaquinone biosynthesis C-methyltransferase UbiE from Brucella canis (strain ATCC 23365 / NCTC 10854 / RM-666).